The following is a 299-amino-acid chain: Fluorinase (299 aa).

Residues D15, 20–22, Y76, S157, D210, N215, 269–270, and 277–279 contribute to the S-adenosyl-L-methionine site; these read DDS, SR, and RNA.

This sequence belongs to the SAM hydrolase / SAM-dependent halogenase family.

The catalysed reaction is fluoride + S-adenosyl-L-methionine = 5'-deoxy-5'-fluoroadenosine + L-methionine. Activity is not severely affected by most metal ions (Mg(2+), Mn(2+), Co(2+) and Fe(2+)), but both Cu(2+) and Zn(2+) are strong inhibitors. In terms of biological role, catalyzes the formation of a C-F bond by combining S-adenosyl-L-methionine (SAM) and fluoride to generate 5'-fluoro-5'-deoxyadenosine (5'-FDA) and L-methionine. This is Fluorinase from Actinopolyspora mzabensis.